The following is a 139-amino-acid chain: Actin-depolymerizing factor 7 (139 aa).

The ADF-H domain occupies 7–139 (GMAVDDECKL…GLDVIRGRAN (133 aa)).

The protein belongs to the actin-binding proteins ADF family.

Actin-depolymerizing protein. Severs actin filaments (F-actin) and binds to actin monomers. The sequence is that of Actin-depolymerizing factor 7 (ADF7) from Oryza sativa subsp. japonica (Rice).